The chain runs to 199 residues: uncharacterized protein (199 aa).

The next 4 membrane-spanning stretches (helical) occupy residues 40 to 60 (LLICVFKFCSLFMFSKFFCFL), 86 to 106 (VLTGASSSFTTTAVVAATFPF), 117 to 137 (TSWPLFIMLMSSSALPLLTSS), and 166 to 186 (FLLAMSMFVDFFSHPCFALIL).

Its subcellular location is the membrane. This is an uncharacterized protein from Saccharomyces cerevisiae (strain ATCC 204508 / S288c) (Baker's yeast).